Reading from the N-terminus, the 241-residue chain is Triosephosphate isomerase (241 aa).

Substrate is bound at residue 9 to 11 (NWK). His96 functions as the Electrophile in the catalytic mechanism. Glu165 serves as the catalytic Proton acceptor. Residues Gly171, Ser204, and 225-226 (GG) each bind substrate.

It belongs to the triosephosphate isomerase family. Homodimer.

The protein localises to the cytoplasm. It carries out the reaction D-glyceraldehyde 3-phosphate = dihydroxyacetone phosphate. Its pathway is carbohydrate biosynthesis; gluconeogenesis. The protein operates within carbohydrate degradation; glycolysis; D-glyceraldehyde 3-phosphate from glycerone phosphate: step 1/1. Its function is as follows. Involved in the gluconeogenesis. Catalyzes stereospecifically the conversion of dihydroxyacetone phosphate (DHAP) to D-glyceraldehyde-3-phosphate (G3P). The polypeptide is Triosephosphate isomerase (Picosynechococcus sp. (strain ATCC 27264 / PCC 7002 / PR-6) (Agmenellum quadruplicatum)).